The following is a 118-amino-acid chain: Galanin peptides (118 aa).

The first 19 residues, 1-19 (MHRCVGGVCVSLIVCAFLT), serve as a signal peptide directing secretion. A propeptide spanning residues 20–30 (ETLGMVIAAKE) is cleaved from the precursor. Residue alanine 61 is modified to Alanine amide.

The protein belongs to the galanin family. As to expression, strongly expressed in brain and stomach, moderately in the eye, and very weakly in heart, kidney and gills. Not detected in liver.

The protein localises to the secreted. In terms of biological role, endocrine hormone of the central and peripheral nervous systems that binds and activates the G protein-coupled receptors GALR1 (galr1a and galr1b) and GALR2 (galr2a and galr2b). This small neuropeptide may regulate diverse physiologic functions including contraction of smooth muscle of the gastrointestinal and genitourinary tract, growth hormone and insulin release and adrenal secretion. The chain is Galanin peptides from Danio rerio (Zebrafish).